The sequence spans 532 residues: Cyclin-L1 (532 aa).

2 cyclin-like regions span residues 94–196 (ELIQ…RVLK) and 209–293 (KIIV…ETLR). Residue Thr-331 is modified to Phosphothreonine. The tract at residues 332-532 (PALSTLGGFS…SRSGHGRHRR (201 aa)) is disordered. A phosphoserine mark is found at Ser-341 and Ser-344. Residues Lys-345 and Lys-353 each participate in a glycyl lysine isopeptide (Lys-Gly) (interchain with G-Cter in SUMO2) cross-link. Over residues 348–358 (SPREVKAEEKS) the composition is skewed to basic and acidic residues. Ser-358 and Ser-361 each carry phosphoserine. Over residues 367 to 376 (VKKEPEDRQQ) the composition is skewed to basic and acidic residues. Residue Lys-368 forms a Glycyl lysine isopeptide (Lys-Gly) (interchain with G-Cter in SUMO2) linkage. Ser-380 is subject to Phosphoserine. 4 stretches are compositionally biased toward basic residues: residues 388 to 424 (DSKRSRTSRSASRSRSRTRSRSRSHSPRRHYNNRRSR), 444 to 458 (RRHHNHGSPHLKAKH), 466 to 482 (SNRHGHKRKKSRSRSQS), and 492 to 504 (KKHRHERGHHRDR). An RS region spans residues 396–438 (RSASRSRSRTRSRSRSHSPRRHYNNRRSRSGTYSSRSRSRSRS). Ser-451 is modified (phosphoserine). Over residues 505–514 (RERSRSFERS) the composition is skewed to basic and acidic residues. Basic residues predominate over residues 515-532 (HKGKHHGGSRSGHGRHRR).

The protein belongs to the cyclin family. Cyclin L subfamily. In terms of assembly, interacts with POLR2A via its hyperphosphorylated C-terminal domain (CTD). Interacts with CDK11A, CDK11B, CDK12 and CDK13. May form a ternary complex with CDK11B and casein kinase II (CKII). Interacts with pre-mRNA-splicing factors, including at least SRSF1, SRSF2 and SRSF7/SLU7. Widely expressed (at protein level).

The protein resides in the nucleus speckle. It localises to the nucleus. It is found in the nucleoplasm. The protein localises to the cytoplasm. Involved in pre-mRNA splicing. Functions in association with cyclin-dependent kinases (CDKs). May play a role in the regulation of RNA polymerase II (pol II). Inhibited by the CDK-specific inhibitor CDKN1A/p21. The protein is Cyclin-L1 (Ccnl1) of Mus musculus (Mouse).